Here is a 429-residue protein sequence, read N- to C-terminus: CinA-like protein (429 aa).

This sequence belongs to the CinA family.

This chain is CinA-like protein, found in Chlorobium limicola (strain DSM 245 / NBRC 103803 / 6330).